Consider the following 328-residue polypeptide: MLNEFPIFDYEDIQLIPNKCVIKSRAEADTSVTLGNHTFKLPVVPANMQTILDENVAEQLAKGGYFYIMHRFDEAGRIPFIKRMHNQGLIASISVGVKDYEYDFVRQLKTDAPEYITIDIAHGHADSVISMIQHIKKELPDTFVIAGNVGTPEAVRELENAGADATKVGIGPGKVCITKVKTGFGTGGWQLAALRWCVKAARKPIIADGGIRTHGDIAKSIRFGASMIMIGSLFAGHIESPGKTIEVDGEQFKEYYGSASQYQKGAYKNVEGKRILLPAKGHLQDTLTEMEQDLQSAISYAGGRQVADLKHVDYVIVKNSIWNGDASH.

C176 (thioimidate intermediate) is an active-site residue. 205-228 (IIADGGIRTHGDIAKSIRFGASMI) provides a ligand contact to NADP(+).

The protein belongs to the IMPDH/GMPR family. GuaC type 2 subfamily.

It catalyses the reaction IMP + NH4(+) + NADP(+) = GMP + NADPH + 2 H(+). Its function is as follows. Catalyzes the irreversible NADPH-dependent deamination of GMP to IMP. It functions in the conversion of nucleobase, nucleoside and nucleotide derivatives of G to A nucleotides, and in maintaining the intracellular balance of A and G nucleotides. The protein is GMP reductase of Streptococcus pneumoniae (strain JJA).